The following is a 554-amino-acid chain: Glutamine--tRNA ligase (554 aa).

A 'HIGH' region motif is present at residues Pro34–His44. Residues Glu35–Asn37 and His41–Ser47 contribute to the ATP site. Asp67 and Tyr212 together coordinate L-glutamine. ATP contacts are provided by residues Thr231, Arg261–Leu262, and Met269–Lys271. The 'KMSKS' region signature appears at Val268–Arg272. The interaction with tRNA stretch occupies residues Thr317–Glu324.

Belongs to the class-I aminoacyl-tRNA synthetase family. Monomer.

The protein resides in the cytoplasm. It carries out the reaction tRNA(Gln) + L-glutamine + ATP = L-glutaminyl-tRNA(Gln) + AMP + diphosphate. The sequence is that of Glutamine--tRNA ligase from Escherichia coli O127:H6 (strain E2348/69 / EPEC).